The following is a 315-amino-acid chain: Protein-L-isoaspartate O-methyltransferase (315 aa).

Disordered regions lie at residues 1–47 (MSGE…KPAA) and 59–89 (RALP…AAPK). Positions 14–34 (EDLKRAPRKSEVRSGSGERHA) are enriched in basic and acidic residues. 2 stretches are compositionally biased toward low complexity: residues 35–47 (ASAV…KPAA) and 59–81 (RALP…LKPA). S162 is an active-site residue.

Belongs to the methyltransferase superfamily. L-isoaspartyl/D-aspartyl protein methyltransferase family.

Its subcellular location is the cytoplasm. The enzyme catalyses [protein]-L-isoaspartate + S-adenosyl-L-methionine = [protein]-L-isoaspartate alpha-methyl ester + S-adenosyl-L-homocysteine. In terms of biological role, catalyzes the methyl esterification of L-isoaspartyl residues in peptides and proteins that result from spontaneous decomposition of normal L-aspartyl and L-asparaginyl residues. It plays a role in the repair and/or degradation of damaged proteins. The polypeptide is Protein-L-isoaspartate O-methyltransferase (Burkholderia ambifaria (strain MC40-6)).